The chain runs to 375 residues: Queuine tRNA-ribosyltransferase (375 aa).

Residue D89 is the Proton acceptor of the active site. Residues 89–93 (DSGGF), D143, Q187, and G214 each bind substrate. The RNA binding stretch occupies residues 245 to 251 (GVGKPED). The Nucleophile role is filled by D264. Residues 269–273 (TRNAR) are RNA binding; important for wobble base 34 recognition. Zn(2+) is bound by residues C302, C304, C307, and H333.

This sequence belongs to the queuine tRNA-ribosyltransferase family. As to quaternary structure, homodimer. Within each dimer, one monomer is responsible for RNA recognition and catalysis, while the other monomer binds to the replacement base PreQ1. It depends on Zn(2+) as a cofactor.

The enzyme catalyses 7-aminomethyl-7-carbaguanine + guanosine(34) in tRNA = 7-aminomethyl-7-carbaguanosine(34) in tRNA + guanine. The protein operates within tRNA modification; tRNA-queuosine biosynthesis. In terms of biological role, catalyzes the base-exchange of a guanine (G) residue with the queuine precursor 7-aminomethyl-7-deazaguanine (PreQ1) at position 34 (anticodon wobble position) in tRNAs with GU(N) anticodons (tRNA-Asp, -Asn, -His and -Tyr). Catalysis occurs through a double-displacement mechanism. The nucleophile active site attacks the C1' of nucleotide 34 to detach the guanine base from the RNA, forming a covalent enzyme-RNA intermediate. The proton acceptor active site deprotonates the incoming PreQ1, allowing a nucleophilic attack on the C1' of the ribose to form the product. After dissociation, two additional enzymatic reactions on the tRNA convert PreQ1 to queuine (Q), resulting in the hypermodified nucleoside queuosine (7-(((4,5-cis-dihydroxy-2-cyclopenten-1-yl)amino)methyl)-7-deazaguanosine). In Salmonella arizonae (strain ATCC BAA-731 / CDC346-86 / RSK2980), this protein is Queuine tRNA-ribosyltransferase.